We begin with the raw amino-acid sequence, 287 residues long: Aquaporin PIP2-1 (287 aa).

Met1 is subject to N-acetylmethionine. The Cytoplasmic segment spans residues 2–39; the sequence is AKDVEAVPGEGFQTRDYQDPPPAPFIDGAELKKWSFYR. Lys3 carries the post-translational modification N6,N6-dimethyllysine; partial. The chain crosses the membrane as a helical span at residues 40 to 60; that stretch reads AVIAEFVATLLFLYITVLTVI. Over 61–83 the chain is Extracellular; sequence GYKIQSDTDAGGVDCGGVGILGI. The helical transmembrane segment at 84–104 threads the bilayer; the sequence is AWAFGGMIFILVYCTAGISGG. At 105–125 the chain is on the cytoplasmic side; it reads HINPAVTFGLFLARKVSLPRA. Positions 107–109 match the NPA 1 motif; sequence NPA. Residues 126-146 traverse the membrane as a helical segment; it reads LLYIIAQCLGAICGVGFVKAF. Residues 147–167 lie on the Extracellular side of the membrane; sequence QSSYYTRYGGGANSLADGYST. A helical transmembrane segment spans residues 168 to 188; it reads GTGLAAEIIGTFVLVYTVFSA. The Cytoplasmic portion of the chain corresponds to 189–201; sequence TDPKRSARDSHVP. Residues 202-222 form a helical membrane-spanning segment; the sequence is VLAPLPIGFAVFMVHLATIPI. The Extracellular portion of the chain corresponds to 223 to 249; sequence TGTGINPARSFGAAVIYNKSKPWDDHW. An NPA 2 motif is present at residues 228–230; the sequence is NPA. A helical transmembrane segment spans residues 250–270; that stretch reads IFWVGPFIGAAIAAFYHQFVL. Residues 271–287 lie on the Cytoplasmic side of the membrane; it reads RASGSKSLGSFRSAANV. Phosphoserine is present on residues Ser280 and Ser283.

Belongs to the MIP/aquaporin (TC 1.A.8) family. PIP (TC 1.A.8.11) subfamily. Ubiquitinated by RMA1, leading to proteasomal degradation. In terms of processing, the phosphorylation at Ser-280 and Ser-283 is altered by salt (NaCl) and hydrogen peroxide H(2)O(2) treatments. Phosphorylation of Ser-283 is required for plasma membrane targeting. As to expression, predominantly expressed in roots and green siliques. Also expressed at lower level above ground and in flower buds.

The protein resides in the cell membrane. Functionally, water channel required to facilitate the transport of water across cell membrane. Probably involved in root water uptake. Its function is impaired by Hg(2+). The protein is Aquaporin PIP2-1 (PIP2-1) of Arabidopsis thaliana (Mouse-ear cress).